The sequence spans 386 residues: Chaperone protein DnaJ (386 aa).

A J domain is found at 3 to 68 (DYYEILEVAR…KKRQVYDRYG (66 aa)). The CR-type zinc-finger motif lies at 146-224 (GVDKELVISN…CKGQGAVKEK (79 aa)). Zn(2+)-binding residues include cysteine 159, cysteine 162, cysteine 176, cysteine 179, cysteine 198, cysteine 201, cysteine 212, and cysteine 215. 4 CXXCXGXG motif repeats span residues 159 to 166 (CNVCNGKG), 176 to 183 (CSECKGRG), 198 to 205 (CPKCHGEG), and 212 to 219 (CKNCKGQG).

This sequence belongs to the DnaJ family. As to quaternary structure, homodimer. The cofactor is Zn(2+).

The protein localises to the cytoplasm. Functionally, participates actively in the response to hyperosmotic and heat shock by preventing the aggregation of stress-denatured proteins and by disaggregating proteins, also in an autonomous, DnaK-independent fashion. Unfolded proteins bind initially to DnaJ; upon interaction with the DnaJ-bound protein, DnaK hydrolyzes its bound ATP, resulting in the formation of a stable complex. GrpE releases ADP from DnaK; ATP binding to DnaK triggers the release of the substrate protein, thus completing the reaction cycle. Several rounds of ATP-dependent interactions between DnaJ, DnaK and GrpE are required for fully efficient folding. Also involved, together with DnaK and GrpE, in the DNA replication of plasmids through activation of initiation proteins. The polypeptide is Chaperone protein DnaJ (Protochlamydia amoebophila (strain UWE25)).